We begin with the raw amino-acid sequence, 388 residues long: Acetate kinase (388 aa).

Position 7 (asparagine 7) interacts with Mg(2+). Lysine 14 lines the ATP pocket. Position 76 (arginine 76) interacts with substrate. Aspartate 133 (proton donor/acceptor) is an active-site residue. ATP is bound by residues 193 to 197, 267 to 269, and 315 to 319; these read HLGNG, DMR, and GIGEN. Glutamate 374 is a Mg(2+) binding site.

The protein belongs to the acetokinase family. As to quaternary structure, homodimer. The cofactor is Mg(2+). Requires Mn(2+) as cofactor.

It is found in the cytoplasm. It catalyses the reaction acetate + ATP = acetyl phosphate + ADP. The protein operates within metabolic intermediate biosynthesis; acetyl-CoA biosynthesis; acetyl-CoA from acetate: step 1/2. In terms of biological role, catalyzes the formation of acetyl phosphate from acetate and ATP. Can also catalyze the reverse reaction. This chain is Acetate kinase, found in Micrococcus luteus (strain ATCC 4698 / DSM 20030 / JCM 1464 / CCM 169 / CCUG 5858 / IAM 1056 / NBRC 3333 / NCIMB 9278 / NCTC 2665 / VKM Ac-2230) (Micrococcus lysodeikticus).